A 205-amino-acid polypeptide reads, in one-letter code: Holliday junction branch migration complex subunit RuvA (205 aa).

The domain I stretch occupies residues 1 to 64 (MIGKLRGLID…EDQIKLFGFR (64 aa)). The segment at 65–143 (SDVEREWFRL…AFANVDPGVV (79 aa)) is domain II. The interval 144-154 (RLSGAIEESRA) is flexible linker. Positions 154–205 (APQPVADAISALINLGYGQPQAAAAIAAASRAAGDKAETAQLIRLGLKELAK) are domain III.

The protein belongs to the RuvA family. As to quaternary structure, homotetramer. Forms an RuvA(8)-RuvB(12)-Holliday junction (HJ) complex. HJ DNA is sandwiched between 2 RuvA tetramers; dsDNA enters through RuvA and exits via RuvB. An RuvB hexamer assembles on each DNA strand where it exits the tetramer. Each RuvB hexamer is contacted by two RuvA subunits (via domain III) on 2 adjacent RuvB subunits; this complex drives branch migration. In the full resolvosome a probable DNA-RuvA(4)-RuvB(12)-RuvC(2) complex forms which resolves the HJ.

The protein localises to the cytoplasm. Its function is as follows. The RuvA-RuvB-RuvC complex processes Holliday junction (HJ) DNA during genetic recombination and DNA repair, while the RuvA-RuvB complex plays an important role in the rescue of blocked DNA replication forks via replication fork reversal (RFR). RuvA specifically binds to HJ cruciform DNA, conferring on it an open structure. The RuvB hexamer acts as an ATP-dependent pump, pulling dsDNA into and through the RuvAB complex. HJ branch migration allows RuvC to scan DNA until it finds its consensus sequence, where it cleaves and resolves the cruciform DNA. The chain is Holliday junction branch migration complex subunit RuvA from Bradyrhizobium sp. (strain ORS 278).